Here is a 71-residue protein sequence, read N- to C-terminus: Protein translocase subunit SecE (71 aa).

Residues 43–63 form a helical membrane-spanning segment; that stretch reads VAGAGILAVGAVGFIIYVLLT.

The protein belongs to the SecE/SEC61-gamma family. As to quaternary structure, component of the Sec protein translocase complex. Heterotrimer consisting of SecY (alpha), SecG (beta) and SecE (gamma) subunits. The heterotrimers can form oligomers, although 1 heterotrimer is thought to be able to translocate proteins. Interacts with the ribosome. May interact with SecDF, and other proteins may be involved.

The protein localises to the cell membrane. Functionally, essential subunit of the Sec protein translocation channel SecYEG. Clamps together the 2 halves of SecY. May contact the channel plug during translocation. This Methanosarcina mazei (strain ATCC BAA-159 / DSM 3647 / Goe1 / Go1 / JCM 11833 / OCM 88) (Methanosarcina frisia) protein is Protein translocase subunit SecE.